We begin with the raw amino-acid sequence, 918 residues long: Isoleucine--tRNA ligase (918 aa).

Positions 59-69 match the 'HIGH' region motif; sequence PYANGHLHIGH. Glu-570 lines the L-isoleucyl-5'-AMP pocket. The 'KMSKS' region signature appears at 611-615; sequence KMSKS. Lys-614 lines the ATP pocket. Cys-893, Cys-896, Cys-908, and Cys-911 together coordinate Zn(2+).

The protein belongs to the class-I aminoacyl-tRNA synthetase family. IleS type 1 subfamily. Monomer. It depends on Zn(2+) as a cofactor.

It localises to the cytoplasm. It catalyses the reaction tRNA(Ile) + L-isoleucine + ATP = L-isoleucyl-tRNA(Ile) + AMP + diphosphate. Functionally, catalyzes the attachment of isoleucine to tRNA(Ile). As IleRS can inadvertently accommodate and process structurally similar amino acids such as valine, to avoid such errors it has two additional distinct tRNA(Ile)-dependent editing activities. One activity is designated as 'pretransfer' editing and involves the hydrolysis of activated Val-AMP. The other activity is designated 'posttransfer' editing and involves deacylation of mischarged Val-tRNA(Ile). This Campylobacter concisus (strain 13826) protein is Isoleucine--tRNA ligase.